The sequence spans 732 residues: Exonuclease 1 (732 aa).

The tract at residues Met1–Ser99 is N-domain. Positions 30, 78, 150, 152, 171, 173, and 226 each coordinate Mg(2+). The interval Arg138–Ser230 is I-domain. Disordered stretches follow at residues Tyr422–Pro471, Asp524–Thr625, and Ser661–Asn716. Residues Ser431 and Ser433 each carry the phosphoserine modification. Residues Pro432 to Arg442 show a composition bias toward basic and acidic residues. A Phosphothreonine modification is found at Thr443. At Ser447 the chain carries Phosphoserine. Basic and acidic residues-rich tracts occupy residues Phe457 to Asn467 and Glu525 to Thr537. Composition is skewed to polar residues over residues Arg572–Glu593 and Asp608–Thr625. Residues Ser661–Gln677 are compositionally biased toward low complexity. Residues Lys703 to Asn716 are compositionally biased toward polar residues.

Belongs to the XPG/RAD2 endonuclease family. EXO1 subfamily. The cofactor is Mg(2+). In terms of tissue distribution, specifically expressed in the female germline.

It is found in the nucleus. In terms of biological role, 5'-&gt;3' double-stranded DNA exonuclease which may also contain a cryptic 3'-&gt;5' double-stranded DNA exonuclease activity. Also exhibits endonuclease activity against 5'-overhanging flap structures similar to those generated by displacement synthesis when DNA polymerase encounters the 5'-end of a downstream Okazaki fragment. Required for DNA mismatch repair (MMR). The sequence is that of Exonuclease 1 (tos) from Drosophila melanogaster (Fruit fly).